The chain runs to 200 residues: Pyridoxal 5'-phosphate synthase subunit PdxT (200 aa).

An L-glutamine-binding site is contributed by 52–54 (GES). C84 serves as the catalytic Nucleophile. L-glutamine is bound by residues R115 and 143–144 (IR). Residues H179 and E181 each act as charge relay system in the active site.

The protein belongs to the glutaminase PdxT/SNO family. As to quaternary structure, in the presence of PdxS, forms a dodecamer of heterodimers. Only shows activity in the heterodimer.

It catalyses the reaction aldehydo-D-ribose 5-phosphate + D-glyceraldehyde 3-phosphate + L-glutamine = pyridoxal 5'-phosphate + L-glutamate + phosphate + 3 H2O + H(+). The catalysed reaction is L-glutamine + H2O = L-glutamate + NH4(+). Its pathway is cofactor biosynthesis; pyridoxal 5'-phosphate biosynthesis. Catalyzes the hydrolysis of glutamine to glutamate and ammonia as part of the biosynthesis of pyridoxal 5'-phosphate. The resulting ammonia molecule is channeled to the active site of PdxS. The chain is Pyridoxal 5'-phosphate synthase subunit PdxT from Methanosarcina barkeri (strain Fusaro / DSM 804).